The sequence spans 241 residues: F-box protein At3g22350 (241 aa).

The region spanning 1–44 is the F-box domain; sequence MSDLPLDLVEEILSRVSATSLKRLRSTCKQWNTLFKKRSFSQKH.

This chain is F-box protein At3g22350, found in Arabidopsis thaliana (Mouse-ear cress).